The chain runs to 131 residues: Small ribosomal subunit protein uS11 (131 aa).

It belongs to the universal ribosomal protein uS11 family. Part of the 30S ribosomal subunit. Interacts with proteins S7 and S18. Binds to IF-3.

Functionally, located on the platform of the 30S subunit, it bridges several disparate RNA helices of the 16S rRNA. Forms part of the Shine-Dalgarno cleft in the 70S ribosome. This chain is Small ribosomal subunit protein uS11, found in Granulibacter bethesdensis (strain ATCC BAA-1260 / CGDNIH1).